The chain runs to 337 residues: Anthranilate phosphoribosyltransferase (337 aa).

5-phospho-alpha-D-ribose 1-diphosphate is bound by residues glycine 82, 85-86 (GD), threonine 90, 92-95 (NIST), 110-118 (KHGGRSVSS), and serine 122. Glycine 82 contributes to the anthranilate binding site. Residue serine 94 coordinates Mg(2+). Arginine 168 lines the anthranilate pocket. 2 residues coordinate Mg(2+): aspartate 226 and glutamate 227.

Belongs to the anthranilate phosphoribosyltransferase family. As to quaternary structure, homodimer. Mg(2+) is required as a cofactor.

It carries out the reaction N-(5-phospho-beta-D-ribosyl)anthranilate + diphosphate = 5-phospho-alpha-D-ribose 1-diphosphate + anthranilate. The protein operates within amino-acid biosynthesis; L-tryptophan biosynthesis; L-tryptophan from chorismate: step 2/5. Its function is as follows. Catalyzes the transfer of the phosphoribosyl group of 5-phosphorylribose-1-pyrophosphate (PRPP) to anthranilate to yield N-(5'-phosphoribosyl)-anthranilate (PRA). The polypeptide is Anthranilate phosphoribosyltransferase (Francisella tularensis subsp. holarctica (strain OSU18)).